A 432-amino-acid chain; its full sequence is Chorismate synthase aro-2 (432 aa).

Catalysis depends on residues His-17, His-106, and Asp-367. The disordered stretch occupies residues Leu-406–Gln-432. Residues Gln-408–Gln-432 are compositionally biased toward polar residues.

The protein belongs to the chorismate synthase family. Homotetramer.

It carries out the reaction 5-O-(1-carboxyvinyl)-3-phosphoshikimate = chorismate + phosphate. It catalyses the reaction FMNH2 + NADP(+) = FMN + NADPH + 2 H(+). It functions in the pathway metabolic intermediate biosynthesis; chorismate biosynthesis; chorismate from D-erythrose 4-phosphate and phosphoenolpyruvate: step 7/7. In terms of biological role, bifunctional chorismate synthase and flavin reductase that catalyzes the conversion of 5-enolpyruvylshikimate 3-phosphate (EPSP) to form chorismate, which is the last common intermediate in the synthesis of the three aromatic amino acids phenylalanine, tyrosine and tryptophan. Acts also as a flavin reductase (FR) able to generate reduced flavin mononucleotide in the presence of NADPH. The polypeptide is Chorismate synthase aro-2 (Neurospora crassa (strain ATCC 24698 / 74-OR23-1A / CBS 708.71 / DSM 1257 / FGSC 987)).